The chain runs to 210 residues: 2-hydroxy-3-keto-5-methylthiopentenyl-1-phosphate phosphatase (210 aa).

Belongs to the HAD-like hydrolase superfamily. MtnX family.

The catalysed reaction is 2-hydroxy-5-methylsulfanyl-3-oxopent-1-enyl phosphate + H2O = 1,2-dihydroxy-5-(methylsulfanyl)pent-1-en-3-one + phosphate. It participates in amino-acid biosynthesis; L-methionine biosynthesis via salvage pathway; L-methionine from S-methyl-5-thio-alpha-D-ribose 1-phosphate: step 4/6. Functionally, dephosphorylates 2-hydroxy-3-keto-5-methylthiopentenyl-1-phosphate (HK-MTPenyl-1-P) yielding 1,2-dihydroxy-3-keto-5-methylthiopentene (DHK-MTPene). This is 2-hydroxy-3-keto-5-methylthiopentenyl-1-phosphate phosphatase from Microcystis aeruginosa.